A 930-amino-acid polypeptide reads, in one-letter code: Translation initiation factor IF-2 (930 aa).

Disordered regions lie at residues 160 to 179 (EPVE…FTDG) and 208 to 301 (AKRA…AAAP). Residues 208–227 (AKRAAEEAKRTQPRAEKPAD) are compositionally biased toward basic and acidic residues. 2 stretches are compositionally biased toward basic residues: residues 263–272 (GHGHKKHHHG) and 288–301 (KRGA…AAAP). In terms of domain architecture, tr-type G spans 431–600 (TRAPVVTVMG…SLQAEVLELT (170 aa)). Residues 440–447 (GHVDHGKT) form a G1 region. 440 to 447 (GHVDHGKT) is a GTP binding site. The tract at residues 465–469 (GITQH) is G2. The interval 486-489 (DTPG) is G3. GTP is bound by residues 486–490 (DTPGH) and 540–543 (NKCD). The tract at residues 540–543 (NKCD) is G4. Residues 576–578 (SAH) are G5.

Belongs to the TRAFAC class translation factor GTPase superfamily. Classic translation factor GTPase family. IF-2 subfamily.

It localises to the cytoplasm. In terms of biological role, one of the essential components for the initiation of protein synthesis. Protects formylmethionyl-tRNA from spontaneous hydrolysis and promotes its binding to the 30S ribosomal subunits. Also involved in the hydrolysis of GTP during the formation of the 70S ribosomal complex. This Cellvibrio japonicus (strain Ueda107) (Pseudomonas fluorescens subsp. cellulosa) protein is Translation initiation factor IF-2.